A 305-amino-acid chain; its full sequence is Type II restriction enzyme SsoII (305 aa).

It carries out the reaction Endonucleolytic cleavage of DNA to give specific double-stranded fragments with terminal 5'-phosphates.. A P subtype restriction enzyme that recognizes the double-stranded sequence 5'-CCNGG-3' and cleaves before C-1. This is Type II restriction enzyme SsoII (ssoIIR) from Shigella sonnei.